We begin with the raw amino-acid sequence, 45 residues long: Large ribosomal subunit protein bL34 (45 aa).

Belongs to the bacterial ribosomal protein bL34 family.

The protein is Large ribosomal subunit protein bL34 of Kocuria rhizophila (strain ATCC 9341 / DSM 348 / NBRC 103217 / DC2201).